The sequence spans 172 residues: Peptide deformylase (172 aa).

Fe cation is bound by residues Cys-91 and His-133. Glu-134 is an active-site residue. Residue His-137 coordinates Fe cation.

Belongs to the polypeptide deformylase family. It depends on Fe(2+) as a cofactor.

The catalysed reaction is N-terminal N-formyl-L-methionyl-[peptide] + H2O = N-terminal L-methionyl-[peptide] + formate. In terms of biological role, removes the formyl group from the N-terminal Met of newly synthesized proteins. Requires at least a dipeptide for an efficient rate of reaction. N-terminal L-methionine is a prerequisite for activity but the enzyme has broad specificity at other positions. The chain is Peptide deformylase from Vibrio campbellii (strain ATCC BAA-1116).